A 196-amino-acid polypeptide reads, in one-letter code: MLFTFFDPIEYAAKTVNKNAPTIPMTDIFRNYKDYFKRALAGYRLRTYYIKGSPRPEELANAIYGNPQLYWVLLMCNDNYDPYYGWITSQEAAYQASIQKYKNVGGDQIVYHVNENGEKFYNLISYDDNPYVWYDKGDKARKYPQYEGALAAVDTYEAAVLENEKLRQIKIIAKSDINSFMNDLIRIMEKSYGNDK.

In terms of assembly, part of the baseplate macromolecular complex which consists of gp5, gp5.4, gp27 (central spike complex); gp6, gp25, gp53 (inner baseplate); gp7, gp8 (intermediate baseplate); gp9, gp10, gp11, gp12 (peripheral); gp48 and gp54 (proximal region of the tail tube). Interacts with gp25 and with the (gp6)2-gp7 heterotrimeric molecule.

The protein localises to the virion. Its function is as follows. Baseplate protein that is located next to the tail tube (inner baseplate). Involved in the tail assembly. Involved in the tail assembly. This Enterobacteria phage T4 (Bacteriophage T4) protein is Baseplate wedge protein gp53 (53).